The chain runs to 650 residues: Chaperone protein DnaK (650 aa).

T200 carries the phosphothreonine; by autocatalysis modification. Residues 611–636 (AQQAGAAGAAGAAAEGASAQGGAQPA) show a composition bias toward low complexity. A disordered region spans residues 611–650 (AQQAGAAGAAGAAAEGASAQGGAQPADDVVDADFKEVKKD).

This sequence belongs to the heat shock protein 70 family.

Functionally, acts as a chaperone. This is Chaperone protein DnaK from Burkholderia mallei (strain NCTC 10247).